Reading from the N-terminus, the 391-residue chain is Elongation factor Tu (391 aa).

The 192-residue stretch at 10 to 201 (KPHVNIGTIG…EVDNYIPTPE (192 aa)) folds into the tr-type G domain. The tract at residues 19-26 (GHVDHGKT) is G1. Residue 19 to 26 (GHVDHGKT) coordinates GTP. Threonine 26 lines the Mg(2+) pocket. Residues 55 to 59 (GITIS) form a G2 region. Positions 76–79 (DCPG) are G3. GTP-binding positions include 76–80 (DCPGH) and 131–134 (NKVD). The G4 stretch occupies residues 131-134 (NKVD). Residues 169–171 (SAL) are G5.

Belongs to the TRAFAC class translation factor GTPase superfamily. Classic translation factor GTPase family. EF-Tu/EF-1A subfamily. In terms of assembly, monomer.

Its subcellular location is the cytoplasm. It catalyses the reaction GTP + H2O = GDP + phosphate + H(+). Functionally, GTP hydrolase that promotes the GTP-dependent binding of aminoacyl-tRNA to the A-site of ribosomes during protein biosynthesis. The chain is Elongation factor Tu from Bartonella henselae (strain ATCC 49882 / DSM 28221 / CCUG 30454 / Houston 1) (Rochalimaea henselae).